The primary structure comprises 264 residues: MTMNTPRPRSQPPPPHPPLFKPTTPPPPPLLSTSTSTSPPHDFSFAHYLSSPPPSVQRRGRADMSRTPPLGRVGSDLSHNNYSSKANQHRQTGSSSSSKEKDREYKAKSKASSPFFSGLGGSWRSGLSRDEEVKRKAKAKTRGLDVGQWVKKYMASMVEHLLASFSRHGGGEREKREQQRRRPHSFSAHGPSALREQRERWRRRRGQLSSAPASLRASPVNSGHLSVGGSVKVSTSSEESTMEELQSAIEAAIAHCKNSITVAK.

Disordered regions lie at residues 1–146 and 165–240; these read MTMN…GLDV and FSRH…SEES. A compositionally biased stretch (pro residues) spans 9–30; it reads RSQPPPPHPPLFKPTTPPPPPL. Residues 31 to 40 are compositionally biased toward low complexity; sequence LSTSTSTSPP. Residues 77–97 show a composition bias toward polar residues; sequence LSHNNYSSKANQHRQTGSSSS. Residues 98-107 are compositionally biased toward basic and acidic residues; sequence SKEKDREYKA. Low complexity-rich tracts occupy residues 208-219 and 227-239; these read LSSAPASLRASP and VGGS…SSEE.

As to quaternary structure, interacts with BRI1. Phosphorylated by BRI1.

Functionally, negative regulator of brassinosteroid signaling. This is Probable BRI1 kinase inhibitor 1 (BKI1) from Oryza sativa subsp. japonica (Rice).